A 413-amino-acid polypeptide reads, in one-letter code: Transmembrane protein 237B (413 aa).

Residues 1–162 (MDPEAKVSSS…EDDDVITDPQ (162 aa)) form a disordered region. A compositionally biased stretch (polar residues) spans 112-122 (DLVSNGDTLDQ). Transmembrane regions (helical) follow at residues 233–253 (VIGL…IIVV), 274–294 (LAYP…VSAF), 312–332 (LSPV…SLSQ), and 360–380 (ILYP…LAWI).

It belongs to the TMEM237 family.

It localises to the membrane. It is found in the cell projection. Its subcellular location is the cilium. Its function is as follows. Component of the transition zone in primary cilia. Required for ciliogenesis. The polypeptide is Transmembrane protein 237B (tmem237b) (Danio rerio (Zebrafish)).